The following is a 440-amino-acid chain: MKNITSSSTCSTGLLQLQNNLSCSELEVAEKTEQQAVGPGTIPSPWTPVNAGPPGALGSADTNGSMVDSKNLDVGDMSDDEKDLSSADAEGVWSPDIEQSFQEALSIYPPCGRRKIILSDEGKMYGRNELIARYIKLRTGKTRTRKQVSSHIQVLARRKLREIQAKIKVQFWQPGLQPSTSQDFYDYSIKPFPQPPYPAGKTSTAVSGDETGIPPSQLPWEGRAIATHKFRLLEFTAFMEIQRDEIYHRHLFVQLGGKPSFSDPLLETVDIRQIFDKFPEKSGGLKDLYEKGPQNAFYLVKCWADLNTDLTTGSETGDFYGVTSQYESNENVVLVCSTIVCSFGKQVVEKVESEYSRLENNRYVYRIQRSPMCEYMINFIQKLKNLPERYMMNSVLENFTILQVMRARETQETLLCIAYVFEVAAQNSGTTHHIYRLIKE.

Residues 32-65 (TEQQAVGPGTIPSPWTPVNAGPPGALGSADTNGS) are disordered. The segment at residues 86 to 162 (SADAEGVWSP…QVLARRKLRE (77 aa)) is a DNA-binding region (TEA).

The C-terminus of sd interacts with the C-terminal serine-rich protein domain of vg, to form a complex which acts as a selector for wing development. Interacts (via C-terminus) with yki (via N-terminus) and this interaction enhances its transcriptional activity. As to expression, subset of neuroblasts in the central nervous system and in the peripheral sense organs of the embryo. Expressed in the developing wing primordia initially along the D/V wing boundary, and by the late third larval instar, maximal expression is seen in cells at the D/V wing disk boundary. Less expression in cells located farther from this boundary. Also expressed in wing progenitor cells.

It is found in the nucleus. Its function is as follows. Transcription factor which plays a key role in the Hippo/SWH (Sav/Wts/Hpo) signaling pathway, a signaling pathway that plays a pivotal role in organ size control and tumor suppression by restricting proliferation and promoting apoptosis. The core of this pathway is composed of a kinase cascade wherein Hippo (Hpo), in complex with its regulatory protein Salvador (Sav), phosphorylates and activates Warts (Wts) in complex with its regulatory protein Mats, which in turn phosphorylates and inactivates the Yorkie (Yki) oncoprotein. The Hippo/SWH signaling pathway inhibits the activity of the transcriptional complex formed by Scalloped (sd) and Yki and the target genes of this pathway include cyclin-E (cycE), diap1 and bantam. Sd promotes nuclear localization of Yki. Involved in the regulation of cell-specific gene expression during development, particularly in the differentiation of the nervous system. When in combination with vestigial (vg) it acts as a transcriptional activation complex that regulates gene expression in the wing. Binding to vg switches the DNA target selectivity of sd. Required autonomously for cell proliferation and viability within the wing blade. Required for proper sensory organ precursor (SOP) differentiation at the wing margin; required for correct expression of sens. The chain is Protein scalloped (sd) from Drosophila melanogaster (Fruit fly).